Consider the following 347-residue polypeptide: Ribosomal RNA large subunit methyltransferase M (347 aa).

Residues Ser184, 217-220 (APGG), Asp236, Asp256, and Asp272 each bind S-adenosyl-L-methionine. Lys301 serves as the catalytic Proton acceptor.

The protein belongs to the class I-like SAM-binding methyltransferase superfamily. RNA methyltransferase RlmE family. RlmM subfamily. Monomer.

The protein resides in the cytoplasm. It carries out the reaction cytidine(2498) in 23S rRNA + S-adenosyl-L-methionine = 2'-O-methylcytidine(2498) in 23S rRNA + S-adenosyl-L-homocysteine + H(+). Functionally, catalyzes the 2'-O-methylation at nucleotide C2498 in 23S rRNA. The sequence is that of Ribosomal RNA large subunit methyltransferase M from Xanthomonas axonopodis pv. citri (strain 306).